A 552-amino-acid polypeptide reads, in one-letter code: Histone deacetylase 15 (552 aa).

The segment at 86-115 (EFVKWCCVNCTMSNPGDMVHCCICGEHKES) adopts a RanBP2-type zinc-finger fold. Positions 149–462 (STAVGFDERM…ATAVIKVLLG (314 aa)) are histone deacetylase. Residue histidine 277 is the Proton donor/acceptor of the active site. The Zn(2+) site is built by aspartate 313, histidine 315, and aspartate 404.

The protein belongs to the histone deacetylase family. HD type 2 subfamily. In terms of assembly, interacts with PIF3 in the dark. Interacts with HY5. Interacts with MYB96. Forms homotetramers. The cofactor is Zn(2+). As to expression, expressed in stems, leaves, flowers, siliques and mature seeds.

The protein localises to the nucleus. Its subcellular location is the cytoplasm. The enzyme catalyses N(6)-acetyl-L-lysyl-[histone] + H2O = L-lysyl-[histone] + acetate. With respect to regulation, inhibited by trichostatin A (TSA), a well-known histone deacetylase inhibitor. Functionally, responsible for the deacetylation of lysine residues on the N-terminal part of the core histones (H2A, H2B, H3 and H4). Histone deacetylation gives a tag for epigenetic repression and plays an important role in transcriptional regulation, cell cycle progression and developmental events. Histone deacetylases act via the formation of large multiprotein complexes. Represses chlorophyll biosynthesis and photosynthesis in the dark. Is recruited by PIF3 to the promoters of chlorophyll biosynthetic and photosynthetic genes, and represses their transcription by histone deacetylation. Involved in the repression of hypocotyl cell elongation to promote photomorphogenesis. Is recruited by HY5 to the promoters of a subset of cell wall organization and auxin signaling-related genes, and represses gene expression by decreasing the levels of histone H4 acetylation in a light-dependent manner. Promotes abscisic acid (ABA) signaling. Is recruited by MYB96 to the promoters of a subset of Rho GTPase (ROP) genes, which repress ABA signaling at the early stages of signal transduction. Represses ROP expression by removing acetyl groups of histone H3 and H4 from the cognate regions, particularly in the presence of ABA. Represses the plant response to elevated ambient temperature by directly repressing warm temperature-responsive genes. The polypeptide is Histone deacetylase 15 (Arabidopsis thaliana (Mouse-ear cress)).